A 334-amino-acid chain; its full sequence is Tryptophan--tRNA ligase (334 aa).

ATP-binding positions include glutamine 11 to serine 13 and glycine 19 to asparagine 20. Residues proline 12–asparagine 20 carry the 'HIGH' region motif. Aspartate 135 contacts L-tryptophan. ATP contacts are provided by residues glycine 147–aspartate 149, valine 186, and lysine 195–serine 199. The short motif at lysine 195–serine 199 is the 'KMSKS' region element.

Belongs to the class-I aminoacyl-tRNA synthetase family. Homodimer.

The protein resides in the cytoplasm. The catalysed reaction is tRNA(Trp) + L-tryptophan + ATP = L-tryptophyl-tRNA(Trp) + AMP + diphosphate + H(+). Catalyzes the attachment of tryptophan to tRNA(Trp). This Salmonella typhi protein is Tryptophan--tRNA ligase.